Reading from the N-terminus, the 323-residue chain is Large ribosomal subunit protein uL10 (323 aa).

Residues 298 to 323 (AAAAPAAAAEPEEEDDDDDFGMGALF) form a disordered region. Positions 307–317 (EPEEEDDDDDF) are enriched in acidic residues.

It belongs to the universal ribosomal protein uL10 family. P0 forms a pentameric complex by interaction with dimers of P1 and P2. Post-translationally, phosphorylated.

Its function is as follows. Ribosomal protein P0 is the functional equivalent of E.coli protein L10. The chain is Large ribosomal subunit protein uL10 from Trypanosoma cruzi.